Reading from the N-terminus, the 85-residue chain is Defensin-like protein 11 (85 aa).

The N-terminal stretch at methionine 1–alanine 29 is a signal peptide. 4 disulfide bridges follow: cysteine 32–cysteine 84, cysteine 44–cysteine 68, cysteine 54–cysteine 75, and cysteine 58–cysteine 77.

This sequence belongs to the DEFL family.

The protein resides in the secreted. This Arabidopsis thaliana (Mouse-ear cress) protein is Defensin-like protein 11.